Consider the following 180-residue polypeptide: UPF0102 protein Tery_0733 (180 aa).

The protein belongs to the UPF0102 family.

The sequence is that of UPF0102 protein Tery_0733 from Trichodesmium erythraeum (strain IMS101).